The following is a 228-amino-acid chain: Upstream activation factor subunit UAF30 (228 aa).

The 56-residue stretch at 1 to 56 (MAELNDYSTMIDILLSDMDLETVTTKKVRMALKEVYAIDVESQGKAINKLIRKHLD) folds into the DEK-C domain. A compositionally biased stretch (basic and acidic residues) spans 89 to 111 (SKRSSGEEKNDSETKGTHVEKKK). Residues 89 to 118 (SKRSSGEEKNDSETKGTHVEKKKGTVSKSP) form a disordered region. An SWIB/MDM2 domain is found at 119–195 (ISTRKVTLSK…HKILASHMTE (77 aa)). The interval 209–228 (VRRKEKPIVSDSEQSDTKGI) is disordered. Ser-218, Ser-220, and Ser-223 each carry phosphoserine.

As to quaternary structure, component of the UAF (upstream activation factor) complex which consists of UAF30, RRN5, RRN9, RRN10, and histones H3 and H4.

It is found in the nucleus. The protein localises to the nucleolus. Functionally, nonessential component of the UAF (upstream activation factor) complex which interacts with the upstream element of the RNA polymerase I promoter and forms a stable preinitiation complex. Together with SPT15/TBP UAF seems to stimulate basal transcription to a fully activated level. UAF30 seems to play a role in silencing transcription by RNA polymerase II. The polypeptide is Upstream activation factor subunit UAF30 (UAF30) (Saccharomyces cerevisiae (strain ATCC 204508 / S288c) (Baker's yeast)).